We begin with the raw amino-acid sequence, 442 residues long: MLGNLGRSLSKTMKKLAGMTIVDEEVVREVIKDIQRALIQSDVNIKLVFNLSKSIEERALNEEPPKGITPKEHIISIVYDEMVKLLGEKSHELVIDDKPYRILFLGLQGSGKTTTIGKLARYLRKKGFTVGVVCTDTWRPAALEQLKQYTEGQDVSIYGDPQNRDALDLAEKGLARFQKKDVIIFDTAGRHKEEKDLLREMEELSAIVEPHEAILVIDGTIGQQAREQALAFRKATDIGSIIVTKLDGSAKGGGALSAVAEIGAPIKFIGTGERIDDLEVFDPERFISRLLGMGDLRSLLEKVEEVSEEEIAEESLDAILSGKFTLRDMRVQFEMMGKMGPLQQVMSMLPGAGKLPKDASRMTEETIRKYLIIMDSMTEEELEKPDIIKHSRIRRIARGSGTRNEDVKELLKYYRVTKKAMKGLGRRKMGGPMGQLMRQFMR.

GTP contacts are provided by residues 106-113 (GLQGSGKT), 186-190 (DTAGR), and 244-247 (TKLD).

This sequence belongs to the GTP-binding SRP family. SRP54 subfamily. Part of the signal recognition particle protein translocation system, which is composed of SRP and FtsY. Archaeal SRP consists of a 7S RNA molecule of 300 nucleotides and two protein subunits: SRP54 and SRP19.

Its subcellular location is the cytoplasm. The enzyme catalyses GTP + H2O = GDP + phosphate + H(+). In terms of biological role, involved in targeting and insertion of nascent membrane proteins into the cytoplasmic membrane. Binds to the hydrophobic signal sequence of the ribosome-nascent chain (RNC) as it emerges from the ribosomes. The SRP-RNC complex is then targeted to the cytoplasmic membrane where it interacts with the SRP receptor FtsY. In Methanothermobacter thermautotrophicus (strain ATCC 29096 / DSM 1053 / JCM 10044 / NBRC 100330 / Delta H) (Methanobacterium thermoautotrophicum), this protein is Signal recognition particle 54 kDa protein.